A 285-amino-acid polypeptide reads, in one-letter code: Probable endonuclease 4 (285 aa).

Positions 69, 109, 145, 179, 182, 216, 229, 231, and 261 each coordinate Zn(2+).

Belongs to the AP endonuclease 2 family. Requires Zn(2+) as cofactor.

It catalyses the reaction Endonucleolytic cleavage to 5'-phosphooligonucleotide end-products.. Endonuclease IV plays a role in DNA repair. It cleaves phosphodiester bonds at apurinic or apyrimidinic (AP) sites, generating a 3'-hydroxyl group and a 5'-terminal sugar phosphate. This is Probable endonuclease 4 from Escherichia fergusonii (strain ATCC 35469 / DSM 13698 / CCUG 18766 / IAM 14443 / JCM 21226 / LMG 7866 / NBRC 102419 / NCTC 12128 / CDC 0568-73).